The following is a 129-amino-acid chain: Small ribosomal subunit protein uS12 (129 aa).

Asp89 is modified (3-methylthioaspartic acid). A disordered region spans residues 110–129 (RKQGRSRYGAPRKQVVATKK).

This sequence belongs to the universal ribosomal protein uS12 family. In terms of assembly, part of the 30S ribosomal subunit. Contacts proteins S8 and S17. May interact with IF1 in the 30S initiation complex.

With S4 and S5 plays an important role in translational accuracy. Functionally, interacts with and stabilizes bases of the 16S rRNA that are involved in tRNA selection in the A site and with the mRNA backbone. Located at the interface of the 30S and 50S subunits, it traverses the body of the 30S subunit contacting proteins on the other side and probably holding the rRNA structure together. The combined cluster of proteins S8, S12 and S17 appears to hold together the shoulder and platform of the 30S subunit. This chain is Small ribosomal subunit protein uS12, found in Rickettsia bellii (strain OSU 85-389).